A 308-amino-acid polypeptide reads, in one-letter code: Flavonol synthase 3 (308 aa).

The Fe2OG dioxygenase domain maps to 167–267; sequence TIEYLMKINY…RISWPVFVES (101 aa). 2-oxoglutarate is bound at residue 175–177; sequence NYY. His192, Asp194, and His248 together coordinate Fe cation. Position 258 to 260 (258 to 260) interacts with 2-oxoglutarate; it reads RIS.

Belongs to the iron/ascorbate-dependent oxidoreductase family. Fe(2+) is required as a cofactor. As to expression, widely expressed at low levels.

It carries out the reaction a (2R,3R)-dihydroflavonol + 2-oxoglutarate + O2 = a flavonol + succinate + CO2 + H2O. It participates in secondary metabolite biosynthesis; flavonoid biosynthesis. Its function is as follows. Catalyzes the formation of flavonols from dihydroflavonols. Possesses low activity in vitro towards dihydrokaempferol and dihydroquercetin producing kaempferol and quercitin, respectively. This is Flavonol synthase 3 from Arabidopsis thaliana (Mouse-ear cress).